We begin with the raw amino-acid sequence, 226 residues long: ATP-dependent dethiobiotin synthetase BioD (226 aa).

12-17 provides a ligand contact to ATP; the sequence is GVGKTV. Residue threonine 16 coordinates Mg(2+). The active site involves lysine 37. Threonine 41 lines the substrate pocket. Residues aspartate 49, 108–111, and 169–170 each bind ATP; these read EGAG and GS. 2 residues coordinate Mg(2+): aspartate 49 and glutamate 108.

The protein belongs to the dethiobiotin synthetase family. As to quaternary structure, homodimer. The cofactor is Mg(2+).

It localises to the cytoplasm. It carries out the reaction (7R,8S)-7,8-diammoniononanoate + CO2 + ATP = (4R,5S)-dethiobiotin + ADP + phosphate + 3 H(+). Its pathway is cofactor biosynthesis; biotin biosynthesis; biotin from 7,8-diaminononanoate: step 1/2. Its function is as follows. Catalyzes a mechanistically unusual reaction, the ATP-dependent insertion of CO2 between the N7 and N8 nitrogen atoms of 7,8-diaminopelargonic acid (DAPA, also called 7,8-diammoniononanoate) to form a ureido ring. The protein is ATP-dependent dethiobiotin synthetase BioD of Mycobacterium marinum (strain ATCC BAA-535 / M).